The following is a 4388-amino-acid chain: MLEGLVAWVLNTYLGKYVNNLNTDQLSVALLKGAVELENLPLKKDALKELELPFEVKAGFIGKVTLQIPFYRPHVDPWVISISSLHLIGAPEKIQDFNDEKEKLLERERKKALLQALEEKWKNDRQQKGESYWYSVTASVVTRIVENIELKIQDVHLRFEDGVTNPSHPFAFGICIKNVSMQNAVNEPVQKLMRKKQLDVAEFSIYWDVDCTLLGDLPQMELQEAMARSMESRSHHYVLEPVFASALLKRNCSKKPLRSRHSPRIDCDIQLETIPLKLSQLQYRQIMEFLKELERKERQVKFRRWKPKVAISKNCREWWYFALNANLYEIREQRKRCTWDFMLHRARDAVSYTDKYFNKLKGGLLSTDDKEEMCRIEEEQSFEELKILRELVHDRFHKQEELAESLREPQFDSPGACPGAPEPGGGSGMLQYLQSWFPGWGGWYGQQTPEGNVVEGLSAEQQEQWIPEEILGTEEFFDPTADASCMNTYTKRDHVFAKLNLQLQRGTVTLLHKEQGTPQMNESAFMQLEFSDVKLLAESLPRRNSSLLSVRLGGLFLRDLATEGTMFPLLVFPNPQKEVGRVSQSFGLQTTSADRSDHYPAADPDGPVFEMLYERNPAHSHFERRLNVSTRPLNIIYNPQAIKKVADFFYKGKVHTSGFGYQSELELRVAEAARRQYNKLKMQTKAEIRQTLDRLLVGDFIEESKRWTVRLDISAPQVIFPDDFKFKNPVLVVVDLGRMLLTNTQDNSRRKSRDGSASEETQFSDDEYKTPLATPPNTPPPESSSSNGEKTPPFSGVEFSEEQLQAHLMSTKMYERYSLSFMDLQIMVGRVKDNWKHVQDIDVGPTHVVEKFNVHLQLERRLIYTSDPKYPGAVLSGNLPDLKIHINEDKISALKNCFALLTTPEMKTSDTQIKEKIFPQEEQRGSLQDSVMNLTQSIVLLEQHTREVLVESQLLLAEFKVNCMQLGVESNGRYISVLKVFGTNAHFVKRPYDAEVSLTVHGLLLVDTMQTYGADFDLLMASHKNLSFDIPTGSLRDSRAQSPVSGPNVAHLTDGATLNDRSATSVSLDKILTKEQESLIKLEYQFVSSECPSMNLDSTLQVISLQVNNLDIILNPETIVELIGFLQKSFPKEKDDLSPQPLMTDFERSFREQGTYQSTYEQNTEVAVEIHRLNLLLLRTVGMANREKYGRKIATASIGGTKVNVSMGSTFDMNGSLGCLQLMDLTQDNVKNQYVVSIGNSVGYENIISDIGYFESVFVRMEDAALTEALSFTFVERSKQECFLNLKMASLHYNHSAKFLKELTLSMDELEENFRGMLKSAATKVTTVLATKTAEYSEMVSLFETPRKTREPFILEENEIYGFDLASSHLDTVKLILNINIESPVVSIPRKPGSPELLVGHLGQIFIQNFVAGDDESRSDRLQVEIKDIKLYSLNCTQLAGREAVGSEGSRMFCPPSGSGSANSQEEAHFTRHDFFESLHRGQAFHILNNTTIQFKLEKIPIERESELTFSLSPDDLGTSSIMKIEGKFVNPVQVVLAKHVYEQVLQTLDNLVYSEDLNKYPASATSSPCPDSPLPPLSTCGESSVERKENGLFSHSSLSNTSQKSLSVKEVKSFTQIQATFCISELQVQLSGDLTLGAQGLVSLKFQDFEVEFSKDHPQTLSIQIALHSLLMEDLLEKNPDSKYKNLMVSRGAPKPSSLAQKEYLSQSCPSVSNVEYPDMPRSLPSHMEEAPNVFQLYQRPTSASRKKQKEVQDKDYPLTPPPSPTVDEPKILVGKSKFDDSLVHINIFLVDKKHPEFSSSYNRVNRSIDVDFNCLDVLITLQTWVVILDFFGIGSTADNHAMRLPPEGILHNVKLEPHASMESGLQDPVNTKLDLKVHSLSLVLNKTTSELAKANVSKLVAHLEMIEGDLALQGSIGSLSLSDLTCHGEFYRERFTTSGEEALIFQTFKYGRPDPLLRREHDIRVSLRMASVQYVHTQRFQAEVVAFIQHFTQLQDVLGRQRAAIEGQTVRDQAQRCSRVLLDIEAGAPVLLIPESSRSNNLIVANLGKLKVKNKFLFAGFPGTFSLQDKESVPSASPTGIPKHSLRKTTSTEEPRGTHSQGQFTMPLAGMSLGSLKSEFVPSTSTKQQGPQPTLSVGQESSSPEDHVCLLDCVVVDLQDMDIFAAERHPREYSKAPEDSSGDLIFPSYFVRQTGGSLLTEPCRLKLQVERNLDKEISHTVPDISIHGNLSSVHCSLDLYKYKLIRGLLENNLGEPIEEFMRPYDLQDPRIHTVLSGEVYTCMCFLIDMVNVSLELKDPKRKEGAGSLARFDFKKCKLLYESFSNQTKSINLVSHSMMAFDTRYAGQKTSPGMTNVFSCIFQPAKNSSTTQGSIQIELHFRSTKDSSCFTVVLNNLRVFLIFDWLLLVHDFLHTPSDIKKQNHVTPSRHRNSSSESAIVPKTVKSGVVTKRSSLPVSNERHLEVKVNVTGTEFVVIEDVSCFDTNAIILKGTTVLTYKPRFVDRPFSGSLFGIEVFSCRLGNEHDTALSIVDPVQIQMELVGNSSYQNSSGLMDAFNSEDFPPVLEIQLQALDIRLSYNDVQLFLAIAKSIPEQANAAVPDSVALESDSVGTYLPGASRVGEEIREGTRHTLDPVLELQLARLQELGFSMDDCRKALLACQGQLKKAASWLFKNAEPLKSLSLASTSRDSPGAVAAPLISGVEIKAESVCICFIDDCMDCDVPLAELTFSRLNFLQRVRTSPEGYAHFTLSGDYYNRALSGWEPFIEPWPCSVSWQQQAASRLHPPRLKLEAKAKPRLDINITSVLIDQYVSTKESWMADYCKDDKDIESAKSEDWMGSSVDPPCFGQSLPLVYLRTRSTASLTNLEHQIYARAEVKTPKRRQPFVPFALRNHTGCTLWFATLTTTPTRAALSHSGSPGVVPEGNGTFLDDTHNVSEWREVLTGEEIPFEFEARGKLRHRHTHDLRIHQLQVRVNGWEQVSPVSVDKVGTFFRYAAPDKNSSSSTIGSPSSRTNIIHPQVYFSSLPPVRVVFAVTMEGSARKVITVRSALIVRNRLETPMELRLDSPSAPDKPVVLPAIMPGDSFAVPLHLTSWRLQARPKGLGVFFCKAPIHWTNVVKTAEISSSKRECHSMDTEKSRFFRFCVAIKKENYPDYMPSNIFSDSAKQIFRQPGHTIYLLPTVVICNLLPCELDFYVKGMPINGTLKPGKEAALHTADTSQNIELGVSLENFPLCKELLIPPGTQNYMVRMRLYDVNRRQLNLTIRIVCRAEGSLKIFISAPYWLINKTGLPLIFRQDNAKTDAAGQFEEHELARSLSPLLFCYADKEQPNLCTMRIGRGIHPEGMPGWCQGFSLDGGSGVRALKVIQQGNRPGLIYNIGIDVKKGRGRYIDTCMVIFAPRYLLDNKSSHKLAFAQREFARGQGTANPEGYISTLPGSSVVFHWPRNDYDQLLCVRLMDVPNCIWSGGFEVNKNNSFHINMRDTLGKCFFLRVEITLRGATYRISFSDTDQLPPPFRIDNFSKVPVVFTQHGVAEPRLRTEVKPMTSLDYAWDEPTLPPFITLTVKGAGSSEINCNMNDFQDNRQLYYENFIYIAATYTFSGLQEGTGRPVASNKAITCAELVLDVSPKTQRVILKKKEPGKRSQLWRMTGTGMLAHEGSSVPHNPNKPSAARSTEGSAILDIAGLAAVTDNRYEPLMLRKPDRRRSTTQTWSFREGKLTCGLHGLVVQAKGGLSGLFDGAEVVLGPDTSMELLGPVPPEQQFINQKMRPGSGMLSIRVIPDGPTRALQITDFCHRKSSRSYEVDELPVTEQELQKLKNPDTEQELEVLVRLEGGIGLSLINKVPEELVFASLTGINVHYTQLATSHMLELSIQDVQVDNQLIGTTQPFMLYVTPLSNENEVIETGPAVQVNAVKFPSKSALTNIYKHLMITAQRFTVQIEEKLLLKLLSFFGYDQAESEVEKYDENLHEKTAEQGGTPIRYYFENLKISIPQIKLSVFTSNKLPLDLKALKSTLGFPLIRFEDAVINLDPFTRVHPYETKEFIINDILKHFQEELLSQAARILGSVDFLGNPMGLLNDVSEGVTGLIKYGNVGGLIRNVTHGVSNSAAKFAGTLSDGLGKTMDNRHQSEREYIRYHAATSGEHLVAGIHGLAHGIIGGLTSVITSTVEGVKTEGGVSGFISGLGKGLVGTVTKPVAGALDFASETAQAVRDTATLSGPRTQAQRVRKPRCCTGPQGLLPRYSESQAEGQEQLFKLTDNIQDEFFIAVENIDSYCVLISSKAVYFLKSGDYVDREAIFLEVKYDDLYHCLVSKDHGKVYVQVTKKAVSTSSGVSIPGPSHQKPMVHVKSEVLAVKLSQEINYAKSLYYEQQLMLRLSENREQLELDS.

The Chorein N-terminal domain occupies 2-115 (LEGLVAWVLN…ERERKKALLQ (114 aa)). A Phosphoserine modification is found at Ser663. Positions 745–796 (QDNSRRKSRDGSASEETQFSDDEYKTPLATPPNTPPPESSSSNGEKTPPFSG) are disordered. Residues 747 to 756 (NSRRKSRDGS) show a composition bias toward basic and acidic residues. Pro residues predominate over residues 773 to 782 (ATPPNTPPPE). A phosphoserine mark is found at Ser1034, Ser1038, Ser1042, Ser1138, and Ser1341. The disordered stretch occupies residues 1563 to 1582 (ASATSSPCPDSPLPPLSTCG). 3 positions are modified to phosphoserine: Ser1598, Ser1603, and Ser1699. 3 disordered regions span residues 1741–1771 (RPTS…VDEP), 2070–2108 (QDKE…QFTM), and 2122–2145 (FVPS…ESSS). At Thr1761 the chain carries Phosphothreonine. Ser1765 bears the Phosphoserine mark. Residues 2123–2144 (VPSTSTKQQGPQPTLSVGQESS) show a composition bias toward polar residues. 5 positions are modified to phosphoserine: Ser2435, Ser2671, Ser2861, Ser2864, and Ser2983. Residues 2633–2676 (TLDPVLELQLARLQELGFSMDDCRKALLACQGQLKKAASWLFKN) enclose the UBA domain. The region spanning 3276–3558 (LKIFISAPYW…LDYAWDEPTL (283 aa)) is the SHR-BD domain. The residue at position 3524 (Lys3524) is an N6-acetyllysine.

This sequence belongs to the VPS13 family. In terms of tissue distribution, widely expressed.

Mediates the transfer of lipids between membranes at organelle contact sites. Functions in promoting mitochondrial clearance by mitochondrial autophagy (mitophagy), also possibly by positively regulating mitochondrial fission. Mitophagy plays an important role in regulating cell health and mitochondrial size and homeostasis. This chain is Intermembrane lipid transfer protein VPS13D, found in Homo sapiens (Human).